The chain runs to 594 residues: Neuronal PAS domain-containing protein 1 (594 aa).

Residues 45 to 98 enclose the bHLH domain; it reads QRKEKSRNAARWRRGKENLEFFELAKLLPLPGAISSQLDKASIVRLSVTYLRLR. Positions 135-205 constitute a PAS 1 domain; it reads EQHLGGHILQ…EQLGLRAASI (71 aa). The tract at residues 206-237 is disordered; sequence GPPTPPSVSSSSSSSSSSLVDTPEIEASPTEA. Positions 212–223 are enriched in low complexity; sequence SVSSSSSSSSSS. A PAS 2 domain is found at 294-360; sequence APLAELPLHG…IRQSHLDLLD (67 aa). The 44-residue stretch at 366–409 folds into the PAC domain; it reads TGYYRWLQRAGGFVWLQSVATVAGNGKSTGEHHVLWVSHVLSNA. Residues 427 to 498 are disordered; the sequence is QEEPSRPGPE…DPPAPPRPEF (72 aa). Basic and acidic residues predominate over residues 453-480; it reads DQDKDKDPQARGKRIKVEASPKEARGSE.

As to quaternary structure, efficient DNA binding requires dimerization with another bHLH protein. Interacts with ARNT; forms a heterodimer that binds core DNA sequence 5'-[AG]CGTG-3' within the hypoxia response element (HRE) leading to a transcriptional repressor on its target gene TH. As to expression, expressed in brain in inhibitory interneurons. Also found in spinal cord.

The protein resides in the nucleus. In terms of biological role, may control regulatory pathways relevant to schizophrenia and to psychotic illness. May play a role in late central nervous system development by modulating EPO expression in response to cellular oxygen level. Forms a heterodimer that binds core DNA sequence 5'-TACGTG-3' within the hypoxia response element (HRE) leading to transcriptional repression on its target gene TH. The polypeptide is Neuronal PAS domain-containing protein 1 (Npas1) (Mus musculus (Mouse)).